Here is a 21-residue protein sequence, read N- to C-terminus: Pseudogermin (21 aa).

Belongs to the germin family. In terms of assembly, homotetramer.

The protein resides in the secreted. The protein localises to the extracellular space. Its subcellular location is the apoplast. It localises to the cell wall. Functionally, may subsume the role of germin at the low water potentials during embryogenesis. The protein is Pseudogermin of Triticum aestivum (Wheat).